The sequence spans 363 residues: tRNA(Met) cytidine acetate ligase (363 aa).

Residues 7 to 20, G96, N152, and R175 each bind ATP; that span reads IAEF…HKYL.

Belongs to the TmcAL family.

The protein resides in the cytoplasm. The catalysed reaction is cytidine(34) in elongator tRNA(Met) + acetate + ATP = N(4)-acetylcytidine(34) in elongator tRNA(Met) + AMP + diphosphate. Functionally, catalyzes the formation of N(4)-acetylcytidine (ac(4)C) at the wobble position of elongator tRNA(Met), using acetate and ATP as substrates. First activates an acetate ion to form acetyladenylate (Ac-AMP) and then transfers the acetyl group to tRNA to form ac(4)C34. This chain is tRNA(Met) cytidine acetate ligase, found in Streptococcus thermophilus (strain ATCC BAA-250 / LMG 18311).